The sequence spans 126 residues: Large ribosomal subunit protein bL12 (126 aa).

The protein belongs to the bacterial ribosomal protein bL12 family. As to quaternary structure, homodimer. Part of the ribosomal stalk of the 50S ribosomal subunit. Forms a multimeric L10(L12)X complex, where L10 forms an elongated spine to which 2 to 4 L12 dimers bind in a sequential fashion. Binds GTP-bound translation factors.

Its function is as follows. Forms part of the ribosomal stalk which helps the ribosome interact with GTP-bound translation factors. Is thus essential for accurate translation. In Chlorobaculum tepidum (strain ATCC 49652 / DSM 12025 / NBRC 103806 / TLS) (Chlorobium tepidum), this protein is Large ribosomal subunit protein bL12.